A 257-amino-acid chain; its full sequence is BTB/POZ domain-containing protein KCTD1 (257 aa).

Residues 1-25 (MSRPLITRSPASPLNNQGIPTPAQL) are disordered. Phosphoserine is present on residues S9 and S12. The span at 9-25 (SPASPLNNQGIPTPAQL) shows a compositional bias: polar residues. Positions 30-100 (APVHIDVGGH…LRTSKLLIPD (71 aa)) constitute a BTB domain.

In terms of assembly, forms homopentamers. Interacts with KCTD15, probably forming heteropentamers depending on its abundance in a cell-type dependent manner. Interacts with TFAP2A, TFAP2B and TFAP2C via the BTB domain. Sumoylated. As to expression, expressed in mammary gland, kidney, brain and ovary.

Its subcellular location is the nucleus. Functionally, may repress the transcriptional activity of AP-2 family members, including TFAP2A, TFAP2B and TFAP2C to various extent. In Homo sapiens (Human), this protein is BTB/POZ domain-containing protein KCTD1 (KCTD1).